The primary structure comprises 288 residues: ATP synthase gamma chain (288 aa).

This sequence belongs to the ATPase gamma chain family. F-type ATPases have 2 components, CF(1) - the catalytic core - and CF(0) - the membrane proton channel. CF(1) has five subunits: alpha(3), beta(3), gamma(1), delta(1), epsilon(1). CF(0) has three main subunits: a, b and c.

The protein localises to the cell inner membrane. Produces ATP from ADP in the presence of a proton gradient across the membrane. The gamma chain is believed to be important in regulating ATPase activity and the flow of protons through the CF(0) complex. This chain is ATP synthase gamma chain, found in Polaromonas sp. (strain JS666 / ATCC BAA-500).